Here is a 78-residue protein sequence, read N- to C-terminus: Acyl carrier protein (78 aa).

Residues 2 to 77 (STIEERVKKI…EAIDYVTAHA (76 aa)) form the Carrier domain. Ser-37 is modified (O-(pantetheine 4'-phosphoryl)serine).

Belongs to the acyl carrier protein (ACP) family. In terms of processing, 4'-phosphopantetheine is transferred from CoA to a specific serine of apo-ACP by AcpS. This modification is essential for activity because fatty acids are bound in thioester linkage to the sulfhydryl of the prosthetic group.

Its subcellular location is the cytoplasm. Its pathway is lipid metabolism; fatty acid biosynthesis. Its function is as follows. Carrier of the growing fatty acid chain in fatty acid biosynthesis. The sequence is that of Acyl carrier protein from Ectopseudomonas mendocina (strain ymp) (Pseudomonas mendocina).